Consider the following 247-residue polypeptide: Cyclin-Q (247 aa).

The protein belongs to the cyclin family. Cyclin-like FAM58 subfamily.

Functionally, may be an activating cyclin for the cyclin-associated kinase CDK10. The protein is Cyclin-Q (ccnq) of Danio rerio (Zebrafish).